Consider the following 358-residue polypeptide: Alanine racemase (358 aa).

The Proton acceptor; specific for D-alanine role is filled by lysine 35. Lysine 35 is modified (N6-(pyridoxal phosphate)lysine). Arginine 130 is a binding site for substrate. Tyrosine 255 serves as the catalytic Proton acceptor; specific for L-alanine. Methionine 303 lines the substrate pocket.

The protein belongs to the alanine racemase family. Pyridoxal 5'-phosphate is required as a cofactor.

The enzyme catalyses L-alanine = D-alanine. The protein operates within amino-acid biosynthesis; D-alanine biosynthesis; D-alanine from L-alanine: step 1/1. Catalyzes the interconversion of L-alanine and D-alanine. May also act on other amino acids. The chain is Alanine racemase (alr) from Shewanella oneidensis (strain ATCC 700550 / JCM 31522 / CIP 106686 / LMG 19005 / NCIMB 14063 / MR-1).